The following is a 290-amino-acid chain: 4-hydroxy-tetrahydrodipicolinate synthase (290 aa).

Pyruvate is bound at residue Thr-44. The active-site Proton donor/acceptor is Tyr-132. The Schiff-base intermediate with substrate role is filled by Lys-160. Ile-202 provides a ligand contact to pyruvate.

It belongs to the DapA family. In terms of assembly, homotetramer; dimer of dimers.

The protein resides in the cytoplasm. It catalyses the reaction L-aspartate 4-semialdehyde + pyruvate = (2S,4S)-4-hydroxy-2,3,4,5-tetrahydrodipicolinate + H2O + H(+). Its pathway is amino-acid biosynthesis; L-lysine biosynthesis via DAP pathway; (S)-tetrahydrodipicolinate from L-aspartate: step 3/4. Its function is as follows. Catalyzes the condensation of (S)-aspartate-beta-semialdehyde [(S)-ASA] and pyruvate to 4-hydroxy-tetrahydrodipicolinate (HTPA). The polypeptide is 4-hydroxy-tetrahydrodipicolinate synthase (Geobacter metallireducens (strain ATCC 53774 / DSM 7210 / GS-15)).